The following is a 343-amino-acid chain: NADH-quinone oxidoreductase subunit H (343 aa).

8 consecutive transmembrane segments (helical) span residues 5-25 (FIIE…LMAM), 76-96 (FLFV…SAVI), 119-139 (ALLY…IGGW), 158-178 (VSYE…TGTL), 190-210 (MNWN…CAFA), 243-263 (LFAE…LFFG), 284-304 (ILGF…YMWV), and 323-343 (ILIP…LLFK).

Belongs to the complex I subunit 1 family. As to quaternary structure, NDH-1 is composed of 14 different subunits. Subunits NuoA, H, J, K, L, M, N constitute the membrane sector of the complex.

The protein resides in the cell inner membrane. It catalyses the reaction a quinone + NADH + 5 H(+)(in) = a quinol + NAD(+) + 4 H(+)(out). NDH-1 shuttles electrons from NADH, via FMN and iron-sulfur (Fe-S) centers, to quinones in the respiratory chain. The immediate electron acceptor for the enzyme in this species is believed to be ubiquinone. Couples the redox reaction to proton translocation (for every two electrons transferred, four hydrogen ions are translocated across the cytoplasmic membrane), and thus conserves the redox energy in a proton gradient. This subunit may bind ubiquinone. This chain is NADH-quinone oxidoreductase subunit H, found in Flavobacterium psychrophilum (strain ATCC 49511 / DSM 21280 / CIP 103535 / JIP02/86).